The primary structure comprises 218 residues: uncharacterized protein (218 aa).

Residues 1 to 28 (MLSLQCLPPFFISVPNRSTNSCSTAPLR) constitute a chloroplast transit peptide.

Belongs to the SixA phosphatase family.

It localises to the plastid. It is found in the chloroplast. This is an uncharacterized protein from Arabidopsis thaliana (Mouse-ear cress).